The primary structure comprises 263 residues: Protein M1425_2021 (263 aa).

It belongs to the CinA family.

The sequence is that of Protein M1425_2021 from Saccharolobus islandicus (strain M.14.25 / Kamchatka #1) (Sulfolobus islandicus).